We begin with the raw amino-acid sequence, 304 residues long: Putative S-adenosyl-L-methionine-dependent methyltransferase YktD (304 aa).

S-adenosyl-L-methionine is bound by residues aspartate 134 and 163-164; that span reads DF.

The protein belongs to the UPF0677 family.

In terms of biological role, may be involved in polyketide synthesis. The chain is Putative S-adenosyl-L-methionine-dependent methyltransferase YktD (yktD) from Bacillus subtilis (strain 168).